Reading from the N-terminus, the 375-residue chain is DNA replication and repair protein RecF (375 aa).

Residue 30–37 (GENAQGKT) coordinates ATP.

It belongs to the RecF family.

It is found in the cytoplasm. In terms of biological role, the RecF protein is involved in DNA metabolism; it is required for DNA replication and normal SOS inducibility. RecF binds preferentially to single-stranded, linear DNA. It also seems to bind ATP. This chain is DNA replication and repair protein RecF, found in Bacillus cereus (strain B4264).